Reading from the N-terminus, the 470-residue chain is Light-independent protochlorophyllide reductase subunit N (470 aa).

[4Fe-4S] cluster is bound by residues C24, C49, and C109.

The protein belongs to the BchN/ChlN family. As to quaternary structure, protochlorophyllide reductase is composed of three subunits; ChlL, ChlN and ChlB. Forms a heterotetramer of two ChlB and two ChlN subunits. The cofactor is [4Fe-4S] cluster.

It carries out the reaction chlorophyllide a + oxidized 2[4Fe-4S]-[ferredoxin] + 2 ADP + 2 phosphate = protochlorophyllide a + reduced 2[4Fe-4S]-[ferredoxin] + 2 ATP + 2 H2O. It participates in porphyrin-containing compound metabolism; chlorophyll biosynthesis (light-independent). Functionally, component of the dark-operative protochlorophyllide reductase (DPOR) that uses Mg-ATP and reduced ferredoxin to reduce ring D of protochlorophyllide (Pchlide) to form chlorophyllide a (Chlide). This reaction is light-independent. The NB-protein (ChlN-ChlB) is the catalytic component of the complex. The protein is Light-independent protochlorophyllide reductase subunit N of Acaryochloris marina (strain MBIC 11017).